Reading from the N-terminus, the 368-residue chain is Probable replication factor C subunit 5 (368 aa).

G69–T76 is a binding site for ATP.

The protein belongs to the activator 1 small subunits family. As to quaternary structure, heteropentamer of various rfc subunits that forms a complex (RFC) with PCNA in the presence of ATP.

It is found in the nucleus. The elongation of primed DNA templates by DNA polymerase delta and epsilon requires the action of the accessory proteins proliferating cell nuclear antigen (PCNA) and activator 1. The chain is Probable replication factor C subunit 5 from Caenorhabditis elegans.